The following is a 149-amino-acid chain: Lipoprotein MlpF (149 aa).

The N-terminal stretch at 1 to 17 is a signal peptide; that stretch reads MKIINILFCLFLLLLNS. Cysteine 18 is lipidated: N-palmitoyl cysteine. A lipid anchor (S-diacylglycerol cysteine) is attached at cysteine 18. Positions 26 to 58 are disordered; that stretch reads LKNNAQQTKSRGKRDLTQKEATPEKPKSKEELL. A compositionally biased stretch (basic and acidic residues) spans 38–58; the sequence is KRDLTQKEATPEKPKSKEELL.

The protein belongs to the Multicopy lipoprotein (Mlp) family.

The protein resides in the cell outer membrane. An outer membrane protein that may participate in pathogenesis. Some human Lyme disease patients have antibodies against this protein. The Mlp proteins probably undergo intragenic recombination, generating new alleles. The polypeptide is Lipoprotein MlpF (Borreliella burgdorferi (strain ATCC 35210 / DSM 4680 / CIP 102532 / B31) (Borrelia burgdorferi)).